A 453-amino-acid chain; its full sequence is Tol-Pal system protein TolB (453 aa).

Residues 1–31 form the signal peptide; it reads MINNLSISMTKVIKIILAIIIILFNTLSIFA.

Belongs to the TolB family. As to quaternary structure, the Tol-Pal system is composed of five core proteins: the inner membrane proteins TolA, TolQ and TolR, the periplasmic protein TolB and the outer membrane protein Pal. They form a network linking the inner and outer membranes and the peptidoglycan layer.

Its subcellular location is the periplasm. Part of the Tol-Pal system, which plays a role in outer membrane invagination during cell division and is important for maintaining outer membrane integrity. The protein is Tol-Pal system protein TolB of Orientia tsutsugamushi (strain Ikeda) (Rickettsia tsutsugamushi).